The chain runs to 841 residues: Chitin synthase 1 (841 aa).

The span at 1 to 13 (MNPGQKQEHDQYP) shows a compositional bias: basic and acidic residues. The disordered stretch occupies residues 1-98 (MNPGQKQEHD…YGEAPRRQPR (98 aa)). Over residues 76 to 85 (PPQPMGPPSP) the composition is skewed to pro residues. Helical transmembrane passes span 302-322 (WFFQ…IDVG), 385-405 (SVFG…FTAL), 526-546 (LIFS…LTSA), 564-584 (ILHT…FILA), 602-622 (FFAI…VVGV), 644-664 (NIII…FLFF), 673-693 (FIQY…YAFC), 778-798 (VISW…ENIL), and 816-836 (LWSV…YLIF).

Belongs to the chitin synthase family.

Its subcellular location is the cell membrane. It catalyses the reaction [(1-&gt;4)-N-acetyl-beta-D-glucosaminyl](n) + UDP-N-acetyl-alpha-D-glucosamine = [(1-&gt;4)-N-acetyl-beta-D-glucosaminyl](n+1) + UDP + H(+). In terms of biological role, polymerizes chitin, a structural polymer of the cell wall and septum, by transferring the sugar moiety of UDP-GlcNAc to the non-reducing end of the growing chitin polymer. This is Chitin synthase 1 (chs1) from Phycomyces blakesleeanus (strain ATCC 8743b / DSM 1359 / FGSC 10004 / NBRC 33097 / NRRL 1555).